Reading from the N-terminus, the 95-residue chain is Aspartyl/glutamyl-tRNA(Asn/Gln) amidotransferase subunit C (95 aa).

Belongs to the GatC family. As to quaternary structure, heterotrimer of A, B and C subunits.

The catalysed reaction is L-glutamyl-tRNA(Gln) + L-glutamine + ATP + H2O = L-glutaminyl-tRNA(Gln) + L-glutamate + ADP + phosphate + H(+). It catalyses the reaction L-aspartyl-tRNA(Asn) + L-glutamine + ATP + H2O = L-asparaginyl-tRNA(Asn) + L-glutamate + ADP + phosphate + 2 H(+). Its function is as follows. Allows the formation of correctly charged Asn-tRNA(Asn) or Gln-tRNA(Gln) through the transamidation of misacylated Asp-tRNA(Asn) or Glu-tRNA(Gln) in organisms which lack either or both of asparaginyl-tRNA or glutaminyl-tRNA synthetases. The reaction takes place in the presence of glutamine and ATP through an activated phospho-Asp-tRNA(Asn) or phospho-Glu-tRNA(Gln). This chain is Aspartyl/glutamyl-tRNA(Asn/Gln) amidotransferase subunit C, found in Dinoroseobacter shibae (strain DSM 16493 / NCIMB 14021 / DFL 12).